We begin with the raw amino-acid sequence, 102 residues long: Small ribosomal subunit protein uS10 (102 aa).

The protein belongs to the universal ribosomal protein uS10 family. As to quaternary structure, part of the 30S ribosomal subunit.

Its function is as follows. Involved in the binding of tRNA to the ribosomes. This is Small ribosomal subunit protein uS10 from Rhodopseudomonas palustris (strain HaA2).